The sequence spans 200 residues: MADPRVEELPEEEVKKTQVEDLDNSSDDESDIEAGDSSLPAGSQAVIHSRNEKKARKAIEKLHLQRVPGITRVTLRRPKNILFVINNPEVYKSPNSNTYIVFGEAKIEDLNASAQAAAAQQLASQSAEHDHAGHTHEHEEAGKAKEEEEEDEGEEVDAEGIEDKDIELVMTQANVSRKKAIKALKENDNDIVNSIMALSI.

Over residues 1-19 (MADPRVEELPEEEVKKTQV) the composition is skewed to basic and acidic residues. 2 disordered regions span residues 1–54 (MADP…NEKK) and 118–165 (AAQQ…EDKD). Over residues 20 to 34 (EDLDNSSDDESDIEA) the composition is skewed to acidic residues. One can recognise an NAC-A/B domain in the interval 49–114 (SRNEKKARKA…AKIEDLNASA (66 aa)). A compositionally biased stretch (basic and acidic residues) spans 127 to 146 (AEHDHAGHTHEHEEAGKAKE). The span at 147 to 160 (EEEEDEGEEVDAEG) shows a compositional bias: acidic residues. Residues 161–200 (IEDKDIELVMTQANVSRKKAIKALKENDNDIVNSIMALSI) enclose the UBA domain.

Belongs to the NAC-alpha family. Part of the nascent polypeptide-associated complex (NAC), consisting of npc-1/egd2 and npc-2/egd1. NAC associates with ribosomes via npc-2/egd1.

It localises to the cytoplasm. It is found in the nucleus. Functionally, component of the nascent polypeptide-associated complex (NAC), a dynamic component of the ribosomal exit tunnel, protecting the emerging polypeptides from interaction with other cytoplasmic proteins to ensure appropriate nascent protein targeting. The NAC complex also promotes mitochondrial protein import by enhancing productive ribosome interactions with the outer mitochondrial membrane and blocks the inappropriate interaction of ribosomes translating non-secretory nascent polypeptides with translocation sites in the membrane of the endoplasmic reticulum. Npc-1/egd2 may also be involved in transcription regulation. In Neurospora crassa (strain ATCC 24698 / 74-OR23-1A / CBS 708.71 / DSM 1257 / FGSC 987), this protein is Nascent polypeptide-associated complex subunit alpha (npc-1).